The chain runs to 122 residues: Large ribosomal subunit protein bL12 (122 aa).

Belongs to the bacterial ribosomal protein bL12 family. In terms of assembly, homodimer. Part of the ribosomal stalk of the 50S ribosomal subunit. Forms a multimeric L10(L12)X complex, where L10 forms an elongated spine to which 2 to 4 L12 dimers bind in a sequential fashion. Binds GTP-bound translation factors.

Forms part of the ribosomal stalk which helps the ribosome interact with GTP-bound translation factors. Is thus essential for accurate translation. The sequence is that of Large ribosomal subunit protein bL12 from Dichelobacter nodosus (strain VCS1703A).